Reading from the N-terminus, the 647-residue chain is Acetyl-coenzyme A synthetase (647 aa).

CoA is bound by residues 190–193 and T310; that span reads RGGR. ATP is bound by residues 386–388, 410–415, D499, and R514; these read GEP and DTWWQT. S522 lines the CoA pocket. R525 serves as a coordination point for ATP. V536, H538, and V541 together coordinate Mg(2+). Residue R583 participates in CoA binding. K608 bears the N6-acetyllysine mark.

It belongs to the ATP-dependent AMP-binding enzyme family. It depends on Mg(2+) as a cofactor. Acetylated. Deacetylation by the SIR2-homolog deacetylase activates the enzyme.

The enzyme catalyses acetate + ATP + CoA = acetyl-CoA + AMP + diphosphate. In terms of biological role, catalyzes the conversion of acetate into acetyl-CoA (AcCoA), an essential intermediate at the junction of anabolic and catabolic pathways. AcsA undergoes a two-step reaction. In the first half reaction, AcsA combines acetate with ATP to form acetyl-adenylate (AcAMP) intermediate. In the second half reaction, it can then transfer the acetyl group from AcAMP to the sulfhydryl group of CoA, forming the product AcCoA. The sequence is that of Acetyl-coenzyme A synthetase from Xylella fastidiosa (strain 9a5c).